A 304-amino-acid polypeptide reads, in one-letter code: Acetylglutamate kinase (304 aa).

Substrate contacts are provided by residues 77-78, R99, and N201; that span reads GG.

This sequence belongs to the acetylglutamate kinase family. ArgB subfamily.

The protein resides in the cytoplasm. The catalysed reaction is N-acetyl-L-glutamate + ATP = N-acetyl-L-glutamyl 5-phosphate + ADP. It functions in the pathway amino-acid biosynthesis; L-arginine biosynthesis; N(2)-acetyl-L-ornithine from L-glutamate: step 2/4. Functionally, catalyzes the ATP-dependent phosphorylation of N-acetyl-L-glutamate. The polypeptide is Acetylglutamate kinase (Methylibium petroleiphilum (strain ATCC BAA-1232 / LMG 22953 / PM1)).